The sequence spans 248 residues: Endonuclease V (248 aa).

Mg(2+) is bound by residues D54 and D118.

The protein belongs to the endonuclease V family. Mg(2+) is required as a cofactor.

It localises to the cytoplasm. It catalyses the reaction Endonucleolytic cleavage at apurinic or apyrimidinic sites to products with a 5'-phosphate.. DNA repair enzyme involved in the repair of deaminated bases. Selectively cleaves double-stranded DNA at the second phosphodiester bond 3' to a deoxyinosine leaving behind the intact lesion on the nicked DNA. The protein is Endonuclease V of Natronomonas pharaonis (strain ATCC 35678 / DSM 2160 / CIP 103997 / JCM 8858 / NBRC 14720 / NCIMB 2260 / Gabara) (Halobacterium pharaonis).